We begin with the raw amino-acid sequence, 379 residues long: tRNA(Met) cytidine acetate ligase (379 aa).

ATP is bound by residues 7–20 (ITEYNPFHNGHQYH), G100, N153, and R178.

This sequence belongs to the TmcAL family.

Its subcellular location is the cytoplasm. It catalyses the reaction cytidine(34) in elongator tRNA(Met) + acetate + ATP = N(4)-acetylcytidine(34) in elongator tRNA(Met) + AMP + diphosphate. Catalyzes the formation of N(4)-acetylcytidine (ac(4)C) at the wobble position of elongator tRNA(Met), using acetate and ATP as substrates. First activates an acetate ion to form acetyladenylate (Ac-AMP) and then transfers the acetyl group to tRNA to form ac(4)C34. In Staphylococcus aureus (strain Mu3 / ATCC 700698), this protein is tRNA(Met) cytidine acetate ligase.